A 197-amino-acid polypeptide reads, in one-letter code: Recombination protein RecR (197 aa).

Residues 56–71 (CSVCGNFDTIDPCAIC) form a C4-type zinc finger. In terms of domain architecture, Toprim spans 79-174 (SMLCVVEDVA…TVSGLAHGVP (96 aa)).

Belongs to the RecR family.

May play a role in DNA repair. It seems to be involved in an RecBC-independent recombinational process of DNA repair. It may act with RecF and RecO. The protein is Recombination protein RecR of Paramagnetospirillum magneticum (strain ATCC 700264 / AMB-1) (Magnetospirillum magneticum).